The sequence spans 195 residues: Imidazoleglycerol-phosphate dehydratase (195 aa).

The protein belongs to the imidazoleglycerol-phosphate dehydratase family.

The protein localises to the cytoplasm. It catalyses the reaction D-erythro-1-(imidazol-4-yl)glycerol 3-phosphate = 3-(imidazol-4-yl)-2-oxopropyl phosphate + H2O. Its pathway is amino-acid biosynthesis; L-histidine biosynthesis; L-histidine from 5-phospho-alpha-D-ribose 1-diphosphate: step 6/9. This is Imidazoleglycerol-phosphate dehydratase from Burkholderia lata (strain ATCC 17760 / DSM 23089 / LMG 22485 / NCIMB 9086 / R18194 / 383).